The chain runs to 1215 residues: MIDVNNFESMEIGLASPMKIRSWSYGEVTKPETINYRTLKPEKDGLFDERIFGPTKDFECACGRYKRARYNKRVCERCGVEVTSAKVRRERMGHIELAAPASHIWYFKGIPSRMGLVLDMSPRELEEVIYFASYVVLDAGDTGLEKKQLLSEPRYRELKEEYGNRFTAEMGAEAIQKLLADVDLAKEATELKAVLKEATGQKRTRAVRRLDILEAFLKSGNKPEWMVMDVIPVMPPDLRPMVQLEGGRFATSDLNDLYRRVINRNNRLKRLLELNAPGIIVQNEKRMLQEAVDALIDNGRRGRPVAGPGNRPLKSLSHLLKGKQGRFRQNLLGKRVDYSGRSVIDVGPSMKMNQMGLPVPMAMELFKPFIIHELTKRNLATNVKAAKRMIDKRDEKVFDVLEDVIKEHPVLLNRAPTLHRLGIQAFEPILVSGKAMRLHPLVCAAYNADFDGDQMAIHVPLSDEAQAEARLLMLAAHHILSPRDGEPIVAPSQDMVIGNYYMTTEDKAREGEGMIFKDTNEARMAYRNGYVALQTRVGVLTSSFDKKPFTAEQRQKIMVTSVGKLLFNNIMPEDYTYINEPTADNLQNGVPDKYFLEPGEDIHAYLENAPLVPPFKKGFLSDIIADVYKIYKVTVTSQLLDRIKDLGYYESTISGLTVGIADVTDLKEKPEIIEKAHKQVALVTKQFRRGLITDNERYERVIGIWNDAKDEVQNKLIEHMDIHNPINMMSDSGARGNISNFTQLAGMRGLMASPSGKIMELPILSNFREGLSVLEMFISSHGARKGMTDTALKTANSGYLTRRLVDVAQDVIVREKDCGTDRGLEVTAITNGNEMIEPLYDRILGRYTMKSVFNPETGEKIVGKNVLLNEEMAQKIIDAGVQKVTIRSAFTCNTEHGVCERCYGRNAATGDQVEAGEAIGTVAAQSIGEPGTQLTLRNFHTGGVAGNDDITQGLPRIQEIVESRNPKGKATISEVTGQVVSIEENPAEQTKDVTIKGETDTRTYTLPITARIRVAEGDDIHRGRAINEGSIDPKEMIRVRDVLSTETYLLSEVQNVYRMQGIDLLDKHVEIMIRQMMRKVRVMDPGDTDVLPGELLDISQFRDANYQTLISGGIPATARPVILGITKAALETNSFLSAASFQETTRVLTDAAIRGKNDPLVGLKENVIIGKIIPAGTGMGAYRNIKPKEVSVNTGATDGAITSIREMEEQLKDQD.

Positions 60, 62, 75, and 78 each coordinate Zn(2+). 3 residues coordinate Mg(2+): aspartate 449, aspartate 451, and aspartate 453. Zn(2+) contacts are provided by cysteine 818, cysteine 892, cysteine 899, and cysteine 902.

This sequence belongs to the RNA polymerase beta' chain family. As to quaternary structure, the RNAP catalytic core consists of 2 alpha, 1 beta, 1 beta' and 1 omega subunit. When a sigma factor is associated with the core the holoenzyme is formed, which can initiate transcription. Mg(2+) serves as cofactor. It depends on Zn(2+) as a cofactor.

It carries out the reaction RNA(n) + a ribonucleoside 5'-triphosphate = RNA(n+1) + diphosphate. Functionally, DNA-dependent RNA polymerase catalyzes the transcription of DNA into RNA using the four ribonucleoside triphosphates as substrates. This chain is DNA-directed RNA polymerase subunit beta', found in Limosilactobacillus fermentum (strain NBRC 3956 / LMG 18251) (Lactobacillus fermentum).